Reading from the N-terminus, the 447-residue chain is Trigger factor (447 aa).

Residues 159-244 (GDMLLMQVES…VREIKEEKLP (86 aa)) form the PPIase FKBP-type domain.

Belongs to the FKBP-type PPIase family. Tig subfamily.

The protein resides in the cytoplasm. It catalyses the reaction [protein]-peptidylproline (omega=180) = [protein]-peptidylproline (omega=0). Involved in protein export. Acts as a chaperone by maintaining the newly synthesized protein in an open conformation. Functions as a peptidyl-prolyl cis-trans isomerase. In Dehalococcoides mccartyi (strain ATCC BAA-2100 / JCM 16839 / KCTC 5957 / BAV1), this protein is Trigger factor.